The primary structure comprises 152 residues: MKCAFCGNPDTQVIDSRVSEDGSSIRRRRRCPACDKRFTTFETADVRMPQVVKTAGHRSEFDIEKVRTSFLRALHKRPVSTTLVDEAIDRICHKLLQLGEREVSSRQIGEMVMNELARLDKVAYVRFASVYRSFQDISEFTDAIKEIQKSSH.

A zinc finger lies at 3-34 (CAFCGNPDTQVIDSRVSEDGSSIRRRRRCPAC). In terms of domain architecture, ATP-cone spans 49 to 139 (PQVVKTAGHR…VYRSFQDISE (91 aa)).

It belongs to the NrdR family. Zn(2+) serves as cofactor.

Its function is as follows. Negatively regulates transcription of bacterial ribonucleotide reductase nrd genes and operons by binding to NrdR-boxes. This is Transcriptional repressor NrdR from Chromobacterium violaceum (strain ATCC 12472 / DSM 30191 / JCM 1249 / CCUG 213 / NBRC 12614 / NCIMB 9131 / NCTC 9757 / MK).